We begin with the raw amino-acid sequence, 633 residues long: Leucine-rich repeat and IQ domain-containing protein 3 (633 aa).

LRR repeat units follow at residues 51–72 (SLRV…QGCK), 73–94 (KLIK…TFWN), and 98–119 (NLKL…CVLS). An LRRCT domain is found at 132–179 (CPVSLKKGYRHVLVNSIWPLKALDHHVISDEEIIQNWHLPERFKTFSQ). Residues 215 to 244 (HNSPVLIIQRWIRGFIVRKHLSPYFTRKRH) form the IQ domain. The interval 322–343 (NSKQPRHHIQKGQNEMKSDSED) is disordered. Residues 556–616 (EKREKRKYKQ…AKVEFINTYY (61 aa)) are a coiled coil.

The polypeptide is Leucine-rich repeat and IQ domain-containing protein 3 (Lrriq3) (Rattus norvegicus (Rat)).